The primary structure comprises 245 residues: 14-3-3 protein zeta (245 aa).

The protein belongs to the 14-3-3 family. Homodimer.

Its subcellular location is the cytoplasm. Its function is as follows. Adapter protein implicated in the regulation of a large spectrum of both general and specialized signaling pathways. Binds to a large number of partners, usually by recognition of a phosphoserine or phosphothreonine motif. Binding generally results in the modulation of the activity of the binding partner. This chain is 14-3-3 protein zeta (ywhaz), found in Xenopus tropicalis (Western clawed frog).